A 488-amino-acid polypeptide reads, in one-letter code: Homoserine O-acetyltransferase (488 aa).

An AB hydrolase-1 domain is found at 47–355 (NAILVCHALT…SYGHDAFLLE (309 aa)). S153 serves as the catalytic Nucleophile. A substrate-binding site is contributed by R222. Residues D316 and H349 contribute to the active site. D350 serves as a coordination point for substrate. 2 consecutive CBS domains span residues 376-433 (MTEK…CSKL) and 437-488 (MTRD…RLIG).

This sequence belongs to the AB hydrolase superfamily. MetX family. In terms of assembly, homodimer.

The protein resides in the cytoplasm. The catalysed reaction is L-homoserine + acetyl-CoA = O-acetyl-L-homoserine + CoA. The protein operates within amino-acid biosynthesis; L-methionine biosynthesis via de novo pathway; O-acetyl-L-homoserine from L-homoserine: step 1/1. In terms of biological role, transfers an acetyl group from acetyl-CoA to L-homoserine, forming acetyl-L-homoserine. The sequence is that of Homoserine O-acetyltransferase from Methanococcoides burtonii (strain DSM 6242 / NBRC 107633 / OCM 468 / ACE-M).